Here is a 194-residue protein sequence, read N- to C-terminus: Thiol:disulfide interchange protein CycY (194 aa).

A signal peptide spans 1-37 (MSEQSTSANPQRRTFLMVLPLIAFIGLALLFWFRLGS). The region spanning 46–190 (ALIGRPAPQT…LRSVLLPQME (145 aa)) is the Thioredoxin domain. C92 and C95 form a disulfide bridge.

Belongs to the thioredoxin family. DsbE subfamily.

The protein localises to the periplasm. Its function is as follows. Required for disulfide bond formation in some periplasmic proteins. Also acts as a disulfide oxidoreductase in cytochromes c biogenesis. The cysteines of apocytochromes c must be in the reduced state for covalent linkage between the two moieties to occur. The polypeptide is Thiol:disulfide interchange protein CycY (cycY) (Bradyrhizobium diazoefficiens (strain JCM 10833 / BCRC 13528 / IAM 13628 / NBRC 14792 / USDA 110)).